Reading from the N-terminus, the 104-residue chain is Large ribosomal subunit protein uL24 (104 aa).

The interval 41 to 61 is disordered; it reads ISKKHKKPTPNEKQSGGIFEK.

This sequence belongs to the universal ribosomal protein uL24 family. As to quaternary structure, part of the 50S ribosomal subunit.

In terms of biological role, one of two assembly initiator proteins, it binds directly to the 5'-end of the 23S rRNA, where it nucleates assembly of the 50S subunit. Its function is as follows. One of the proteins that surrounds the polypeptide exit tunnel on the outside of the subunit. This is Large ribosomal subunit protein uL24 from Wigglesworthia glossinidia brevipalpis.